The sequence spans 320 residues: Nodulation efficiency protein NfeD (320 aa).

This sequence belongs to the ornithine cyclodeaminase/mu-crystallin family.

In terms of biological role, seems to be involved in the nodulation efficiency of R.meliloti GR4 on alfalfa roots. This Rhizobium meliloti (Ensifer meliloti) protein is Nodulation efficiency protein NfeD.